The sequence spans 979 residues: Protocadherin alpha-9 (979 aa).

A signal peptide spans 1–59; sequence MRLGNRPEDIRTCVHLRWHIHGLLRQENASVVISKCLRHGAWRLLLWLLLLATWDVGSG. Residues 60 to 726 are Extracellular-facing; the sequence is QLHYSVPEEA…RREASLMDVN (667 aa). 6 Cadherin domains span residues 64 to 163, 164 to 272, 273 to 380, 381 to 485, 486 to 595, and 611 to 707; these read SVPE…PPIF, SVAE…APVF, DRSV…APEI, VLTS…APAF, AHPE…PPTL, and VSRS…VPKA. 2 N-linked (GlcNAc...) asparagine glycosylation sites follow: N287 and N295. The N-linked (GlcNAc...) asparagine glycan is linked to N578. A helical membrane pass occupies residues 727–747; that stretch reads VYLIIAICAVSSLLVLTLLLY. Residues 748-979 are Cytoplasmic-facing; that stretch reads TALRCSAVPM…GNSTTDNSDQ (232 aa). 5 PXXP repeats span residues 763–766, 828–831, 861–864, 902–905, and 920–923; these read LGKP, PRQP, PGGP, PGNP, and PGSP. Residues 763 to 923 are 5 X 4 AA repeats of P-X-X-P; it reads LGKPTLVCSS…PDKFIIPGSP (161 aa). Residues 859–979 are disordered; that stretch reads AGPGGPDQQW…GNSTTDNSDQ (121 aa). Residues 938 to 952 are compositionally biased toward basic and acidic residues; it reads DKSDFITFGKKEETK.

The protein localises to the cell membrane. Its function is as follows. Potential calcium-dependent cell-adhesion protein. May be involved in the establishment and maintenance of specific neuronal connections in the brain. This is Protocadherin alpha-9 from Mus musculus (Mouse).